Here is an 887-residue protein sequence, read N- to C-terminus: Alanine--tRNA ligase (887 aa).

Residues H564, H568, C676, and H680 each coordinate Zn(2+).

Belongs to the class-II aminoacyl-tRNA synthetase family. Requires Zn(2+) as cofactor.

It localises to the cytoplasm. It catalyses the reaction tRNA(Ala) + L-alanine + ATP = L-alanyl-tRNA(Ala) + AMP + diphosphate. Functionally, catalyzes the attachment of alanine to tRNA(Ala) in a two-step reaction: alanine is first activated by ATP to form Ala-AMP and then transferred to the acceptor end of tRNA(Ala). Also edits incorrectly charged Ser-tRNA(Ala) and Gly-tRNA(Ala) via its editing domain. The sequence is that of Alanine--tRNA ligase from Chelativorans sp. (strain BNC1).